A 367-amino-acid chain; its full sequence is Chorismate synthase (367 aa).

NADP(+) contacts are provided by Arg-48 and Arg-54. FMN-binding positions include 125 to 127 (RSS), 238 to 239 (NA), Gly-278, 293 to 297 (KPTSS), and Arg-319.

It belongs to the chorismate synthase family. Homotetramer. It depends on FMNH2 as a cofactor.

It catalyses the reaction 5-O-(1-carboxyvinyl)-3-phosphoshikimate = chorismate + phosphate. Its pathway is metabolic intermediate biosynthesis; chorismate biosynthesis; chorismate from D-erythrose 4-phosphate and phosphoenolpyruvate: step 7/7. Its function is as follows. Catalyzes the anti-1,4-elimination of the C-3 phosphate and the C-6 proR hydrogen from 5-enolpyruvylshikimate-3-phosphate (EPSP) to yield chorismate, which is the branch point compound that serves as the starting substrate for the three terminal pathways of aromatic amino acid biosynthesis. This reaction introduces a second double bond into the aromatic ring system. This Xanthomonas campestris pv. campestris (strain 8004) protein is Chorismate synthase.